The following is a 121-amino-acid chain: uncharacterized protein (121 aa).

Disordered regions lie at residues 1–28 (MGCASAKHVATVQNEEEAQKGKNYQNGD) and 60–82 (QENLEKSASSNVRLKTNKEVPGL). Residues Ser95 and Ser115 each carry the phosphoserine modification.

As to expression, expressed in spleen, prostate, testis and uterus.

This is an uncharacterized protein from Homo sapiens (Human).